Reading from the N-terminus, the 205-residue chain is Octanoyltransferase (205 aa).

In terms of domain architecture, BPL/LPL catalytic spans 30–205 (ERTADEIWLL…QALRARLGYA (176 aa)). Substrate contacts are provided by residues 69–76 (RGGQVTYH), 136–138 (SLG), and 149–151 (GLA). Catalysis depends on Cys167, which acts as the Acyl-thioester intermediate.

This sequence belongs to the LipB family.

It localises to the cytoplasm. The enzyme catalyses octanoyl-[ACP] + L-lysyl-[protein] = N(6)-octanoyl-L-lysyl-[protein] + holo-[ACP] + H(+). It participates in protein modification; protein lipoylation via endogenous pathway; protein N(6)-(lipoyl)lysine from octanoyl-[acyl-carrier-protein]: step 1/2. Catalyzes the transfer of endogenously produced octanoic acid from octanoyl-acyl-carrier-protein onto the lipoyl domains of lipoate-dependent enzymes. Lipoyl-ACP can also act as a substrate although octanoyl-ACP is likely to be the physiological substrate. The protein is Octanoyltransferase of Ectopseudomonas mendocina (strain ymp) (Pseudomonas mendocina).